Reading from the N-terminus, the 276-residue chain is MAIKKYKPTSAGRRGMSTLDFAEITTDKPEKSLLAPLHKKGGRNNQGKMTVRHQGGGHKRQYRIIDFKRNKDGIPGRVATIEYDPNRSANIALINYVDGEKRYILAPKGLKVGMTIESGPEADIKVGNALPLKNIPVGTVIHNIELKPGKGGQLVRSAGAEAQLLGKEGDYVLVRLNSGETRYILATCRATIGQVGNLEHELVNIGKAGRSRWLGKRPTVRGSAMNPNDHPHGGGEGRAPIGRKSPMSPWGKPTLGYKTRKKNKASDKYIVRRRKK.

Disordered stretches follow at residues 36–58 (PLHK…GGGH) and 214–276 (LGKR…RRKK).

This sequence belongs to the universal ribosomal protein uL2 family. As to quaternary structure, part of the 50S ribosomal subunit. Forms a bridge to the 30S subunit in the 70S ribosome.

One of the primary rRNA binding proteins. Required for association of the 30S and 50S subunits to form the 70S ribosome, for tRNA binding and peptide bond formation. It has been suggested to have peptidyltransferase activity; this is somewhat controversial. Makes several contacts with the 16S rRNA in the 70S ribosome. This Halalkalibacterium halodurans (strain ATCC BAA-125 / DSM 18197 / FERM 7344 / JCM 9153 / C-125) (Bacillus halodurans) protein is Large ribosomal subunit protein uL2.